Consider the following 694-residue polypeptide: Prolyl 3-hydroxylase 2 (694 aa).

The signal sequence occupies residues Met1–Gly23. 4 TPR repeats span residues Phe35 to Leu68, Arg136 to His169, His196 to Glu229, and Pro292 to Asp325. Residues Lys386–Thr418 are a coiled coil. Positions His395–Glu427 are disordered. Residues Asn446 and Asn535 are each glycosylated (N-linked (GlcNAc...) asparagine). One can recognise a Fe2OG dioxygenase domain in the interval Thr543 to Leu657. Fe cation-binding residues include His566, Asp568, and His638. Residue Arg648 is part of the active site. The Prevents secretion from ER signature appears at Lys691–Leu694.

The protein belongs to the leprecan family. Requires Fe cation as cofactor. It depends on L-ascorbate as a cofactor.

The protein resides in the endoplasmic reticulum. It is found in the sarcoplasmic reticulum. It localises to the golgi apparatus. It carries out the reaction L-prolyl-[collagen] + 2-oxoglutarate + O2 = trans-3-hydroxy-L-prolyl-[collagen] + succinate + CO2. Its function is as follows. Prolyl 3-hydroxylase that catalyzes the post-translational formation of 3-hydroxyproline on collagens. Contributes to proline 3-hydroxylation of collagen COL4A1 and COL1A1 in tendons, the eye sclera and in the eye lens capsule. Has high activity with the type IV collagen COL4A1, and lower activity with COL1A1. Catalyzes hydroxylation of the first Pro in Gly-Pro-Hyp sequences where Hyp is 4-hydroxyproline. Has no activity on substrates that lack 4-hydroxyproline in the third position. The chain is Prolyl 3-hydroxylase 2 from Gallus gallus (Chicken).